The following is a 1056-amino-acid chain: Potassium transporter TRK1 (1056 aa).

The Cytoplasmic portion of the chain corresponds to 1-46 (MLYRVSGFYKRHTRNFTNIDYGYYIRNFIHHIASKIYPYAKVVLPN). A helical transmembrane segment spans residues 47 to 67 (FRAAHYFYILTLVILGSILVY). Residues 68–73 (PVKTCA) lie on the Extracellular side of the membrane. The stretch at 74-90 (YIDVLFFTAGASTQAGL) is an intramembrane region. The Extracellular segment spans residues 91–99 (NTVNVNDLS). The helical transmembrane segment at 100-122 (LYQQIVLYLLATLATPIFIHGSL) threads the bilayer. Topologically, residues 123 to 622 (LFVRLYYFER…LGGIEYRAVK (500 aa)) are cytoplasmic. Disordered stretches follow at residues 180 to 276 (REAE…IDPE), 290 to 350 (KNQE…EDED), and 404 to 571 (PWTS…SIEN). Over residues 186-203 (SSSSPQSSSSQTSQPVST) the composition is skewed to low complexity. The segment covering 236-245 (EKIHFEEPQR) has biased composition (basic and acidic residues). Polar residues predominate over residues 335–344 (PATNSVGTGN). The segment covering 412-423 (TLSNSSKKGSLS) has biased composition (low complexity). Acidic residues-rich tracts occupy residues 428-449 (DTEDDSEDEEYASIDSETSDIS) and 469-487 (YEEDEDEDEHNSDDDDDGE). Positions 521-533 (RSNTLDTPQQNTS) are enriched in polar residues. Residues 537–549 (KIRKKAPKRKTPR) show a composition bias toward basic residues. The segment covering 553 to 563 (NASFNQHSNVS) has biased composition (polar residues). A helical membrane pass occupies residues 623-646 (LLIKIIVVYYVGFNIIPGVMLSIW). Over 647–665 (IYCMPHYKNLMISSSISPA) the chain is Extracellular. Residues 666–682 (WWAFFTSQSSFNDLGLT) lie within the membrane without spanning it. At 683–693 (LTSNSMMSFNQ) the chain is on the extracellular side. The chain crosses the membrane as a helical span at residues 694–710 (NAFVQILCSFLIVIGNT). Residues 711–754 (GFPILLRFIIWVMFKTARPLSLYKESLGFLLDHPRRCFTLLFPS) lie on the Cytoplasmic side of the membrane. A helical membrane pass occupies residues 755 to 778 (VPTWWLFFILVVLNGFDLVIFCIL). Over 779–793 (DLHDDTFKGVDMGYR) the chain is Extracellular. The stretch at 794–810 (VLNGLFQAFCTRTVGFS) is an intramembrane region. Over 811-817 (VMDLSQL) the chain is Extracellular. A helical transmembrane segment spans residues 818-841 (HAATQVSYLIMMYISVLPIAISVR). Over 842–874 (RTNVYEEQSLGVYAKENAEGVDESAPSNYVGSH) the chain is Cytoplasmic. The helical transmembrane segment at 875–896 (LRNQLSYDLWYICLGLFIICIA) threads the bilayer. Topologically, residues 897–909 (EGKRLKEQDLRFS) are extracellular. An intramembrane segment occupies 910–928 (IFAVLFEIVSAYGTVGMSM). Residues 929-942 (GYPGVDCSLSGEFN) are Extracellular-facing. A helical transmembrane segment spans residues 943 to 965 (VISKLVIIAMMIRGRHRGLPYTI). The Cytoplasmic segment spans residues 966 to 1056 (DRAIMLPNAA…RYVVRTVSEV (91 aa)).

It belongs to the TrkH potassium transport family.

The protein resides in the cell membrane. The catalysed reaction is K(+)(in) = K(+)(out). The enzyme catalyses chloride(in) = chloride(out). TRK1-mediated chloride conductance is blocked by 4,4'-diisothiocyanatostilbene-2,2'-disulfonic acid. Functionally, potassium transporter that mediates K(+) influx, as well as Cl(-) efflux as a secondary function. TRK1 is the major K(+) uptake transporter that regulates membrane potential and intracellular pH. The TRK1-mediated Cl(-) efflux should serve as a Cl(-) detoxification route and may play a role in sustaining C.albicans on mammalian epithelial surfaces, or in physiological saline solutions such as saliva. Its function is as follows. Mediates candidacidal activities of cysteine-free peptides, but not of defensins. The hallmark of salivary gland-secreted histatin-5 (Hst 5) killing of C.albicans is the rapid efflux of cellular ATP and other small nucleotides and ions from the cell as well as concurrent intracellular uptake of propidium iodide (PI). TRK1 is the channel for Hst 5-induced killing and histatin-5 may directly or indirectly alter TRK1 function, allowing the efflux of larger anions, including ATP, and the influx of small cationic dyes, such as PI. The sequence is that of Potassium transporter TRK1 from Candida albicans (strain SC5314 / ATCC MYA-2876) (Yeast).